The following is a 323-amino-acid chain: Acetyl-coenzyme A carboxylase carboxyl transferase subunit alpha (323 aa).

Positions 39–293 constitute a CoA carboxyltransferase C-terminal domain; it reads RLAGKSQQLT…KRSLAESLRQ (255 aa).

Belongs to the AccA family. Acetyl-CoA carboxylase is a heterohexamer composed of biotin carboxyl carrier protein (AccB), biotin carboxylase (AccC) and two subunits each of ACCase subunit alpha (AccA) and ACCase subunit beta (AccD).

The protein resides in the cytoplasm. The catalysed reaction is N(6)-carboxybiotinyl-L-lysyl-[protein] + acetyl-CoA = N(6)-biotinyl-L-lysyl-[protein] + malonyl-CoA. It participates in lipid metabolism; malonyl-CoA biosynthesis; malonyl-CoA from acetyl-CoA: step 1/1. In terms of biological role, component of the acetyl coenzyme A carboxylase (ACC) complex. First, biotin carboxylase catalyzes the carboxylation of biotin on its carrier protein (BCCP) and then the CO(2) group is transferred by the carboxyltransferase to acetyl-CoA to form malonyl-CoA. The chain is Acetyl-coenzyme A carboxylase carboxyl transferase subunit alpha from Cupriavidus pinatubonensis (strain JMP 134 / LMG 1197) (Cupriavidus necator (strain JMP 134)).